The following is a 267-amino-acid chain: Proteasome subunit alpha (267 aa).

The tract at residues 231 to 267 is disordered; sequence ETLLQERDSKESAESEEPIESEEGKKTGKKSDADSSD. Composition is skewed to basic and acidic residues over residues 234-243 and 252-267; these read LQERDSKESA and EEGKKTGKKSDADSSD.

This sequence belongs to the peptidase T1A family. The 20S proteasome core is composed of 14 alpha and 14 beta subunits that assemble into four stacked heptameric rings, resulting in a barrel-shaped structure. The two inner rings, each composed of seven catalytic beta subunits, are sandwiched by two outer rings, each composed of seven alpha subunits. The catalytic chamber with the active sites is on the inside of the barrel. Has a gated structure, the ends of the cylinder being occluded by the N-termini of the alpha-subunits. Is capped by the proteasome-associated ATPase, ARC.

The protein localises to the cytoplasm. It participates in protein degradation; proteasomal Pup-dependent pathway. With respect to regulation, the formation of the proteasomal ATPase ARC-20S proteasome complex, likely via the docking of the C-termini of ARC into the intersubunit pockets in the alpha-rings, may trigger opening of the gate for substrate entry. Interconversion between the open-gate and close-gate conformations leads to a dynamic regulation of the 20S proteasome proteolysis activity. Functionally, component of the proteasome core, a large protease complex with broad specificity involved in protein degradation. The sequence is that of Proteasome subunit alpha from Mycobacterium ulcerans (strain Agy99).